A 104-amino-acid polypeptide reads, in one-letter code: Defensin-2 (104 aa).

The first 19 residues, 1 to 19, serve as a signal peptide directing secretion; it reads MKFFVLFAILIAIVHASCA. 3 disulfides stabilise this stretch: Cys-64/Cys-95, Cys-81/Cys-100, and Cys-85/Cys-102.

Belongs to the invertebrate defensin family. Type 1 subfamily. As to expression, low expression in head and thorax.

It localises to the secreted. Antibacterial peptide mostly active against Gram-positive bacteria. This Apis mellifera (Honeybee) protein is Defensin-2.